Here is a 534-residue protein sequence, read N- to C-terminus: NAD(P)H-quinone oxidoreductase chain 4 1 (534 aa).

The next 14 helical transmembrane spans lie at 6 to 26, 34 to 54, 87 to 107, 113 to 133, 136 to 156, 169 to 189, 209 to 229, 243 to 263, 277 to 297, 311 to 331, 332 to 352, 376 to 396, 418 to 438, and 464 to 484; these read IPWLTTAIAFPLLAALVIPLI, IRWYTLGVALTDFALLVTAFW, LSMPLIILATLITTLATLAAW, PKLFAGLILVMLSAQIGVFAV, LLLFFIMWELELVPVYLLISI, FILYTALGSVFILASTLALAF, ALELLAYAGFLIGFGVKLPIF, SAPVSMILAGVLLKMGGYGLI, FAPLLIVLGIVNIVYGALTAF, ISHMGFVLVGIASFTDLGMNG, AVLQMLSHGFIAAALFFLSGV, FAMFTAAAMASLALPGMSGFV, IAIFLTAVGVILTPIYLLSML, and IFVAVCLLAPIIAIGLYPKLA.

This sequence belongs to the complex I subunit 4 family.

The protein resides in the cellular thylakoid membrane. It carries out the reaction a plastoquinone + NADH + (n+1) H(+)(in) = a plastoquinol + NAD(+) + n H(+)(out). The catalysed reaction is a plastoquinone + NADPH + (n+1) H(+)(in) = a plastoquinol + NADP(+) + n H(+)(out). Its function is as follows. NDH-1 shuttles electrons from NAD(P)H, via FMN and iron-sulfur (Fe-S) centers, to quinones in the respiratory chain. The immediate electron acceptor for the enzyme in this species is believed to be plastoquinone. Couples the redox reaction to proton translocation (for every two electrons transferred, four hydrogen ions are translocated across the cytoplasmic membrane), and thus conserves the redox energy in a proton gradient. This is NAD(P)H-quinone oxidoreductase chain 4 1 from Picosynechococcus sp. (strain ATCC 27264 / PCC 7002 / PR-6) (Agmenellum quadruplicatum).